The sequence spans 786 residues: DNA double-strand break repair Rad50 ATPase (786 aa).

Residues lysine 13, 33-39, and glutamine 138 each bind ATP; that span reads NGSGKTT. 3 coiled-coil regions span residues 194-249, 337-455, and 551-650; these read LKAE…LKSI, EKAK…RALE, and ALER…VKAL. The Zinc-hook domain maps to 366-459; it reads EIAELQNKIN…KIRALEKYKG (94 aa). Residues cysteine 411 and cysteine 414 each coordinate Zn(2+).

Belongs to the SMC family. RAD50 subfamily. Homodimer. Forms a heterotetramer composed of two Mre11 subunits and two Rad50 subunits. The cofactor is Zn(2+).

Its function is as follows. Part of the Rad50/Mre11 complex, which is involved in the early steps of DNA double-strand break (DSB) repair. The complex may facilitate opening of the processed DNA ends to aid in the recruitment of HerA and NurA. Rad50 controls the balance between DNA end bridging and DNA resection via ATP-dependent structural rearrangements of the Rad50/Mre11 complex. This Nanoarchaeum equitans (strain Kin4-M) protein is DNA double-strand break repair Rad50 ATPase.